A 275-amino-acid chain; its full sequence is Putative protein A464R (275 aa).

The region spanning 51-175 is the RNase III domain; that stretch reads KEDVEYLIGM…LMGAIYFDLG (125 aa). Positions 201–269 constitute a DRBM domain; it reads NYKDRLLKHT…SKIALHTMGV (69 aa).

It belongs to the ribonuclease III family.

The protein is Putative protein A464R of Chlorella (PBCV-1).